We begin with the raw amino-acid sequence, 181 residues long: MIAGYIMAAENQTLNQWTINQLGITRGDSILEVGFGPGYCMQQMLKREKDVHLHGIDVSEAMLKLAARRVKPKGVRLIQGSIETFPLPASFYDKVISVNNYTIWNDQTKGIKQIYRALKPGGKAAITMQPREADASPEKTKSFGRQMIADFKAAGFEDIDIQFKNIKPELSVCATAKKPAT.

This sequence belongs to the methyltransferase superfamily.

This is an uncharacterized protein from Bacillus subtilis (strain 168).